Reading from the N-terminus, the 213-residue chain is Protein-L-isoaspartate O-methyltransferase (213 aa).

Serine 62 is an active-site residue.

The protein belongs to the methyltransferase superfamily. L-isoaspartyl/D-aspartyl protein methyltransferase family.

Its subcellular location is the cytoplasm. It carries out the reaction [protein]-L-isoaspartate + S-adenosyl-L-methionine = [protein]-L-isoaspartate alpha-methyl ester + S-adenosyl-L-homocysteine. Functionally, catalyzes the methyl esterification of L-isoaspartyl residues in peptides and proteins that result from spontaneous decomposition of normal L-aspartyl and L-asparaginyl residues. It plays a role in the repair and/or degradation of damaged proteins. The chain is Protein-L-isoaspartate O-methyltransferase from Idiomarina loihiensis (strain ATCC BAA-735 / DSM 15497 / L2-TR).